The chain runs to 441 residues: Proline--tRNA ligase (441 aa).

It belongs to the class-II aminoacyl-tRNA synthetase family. ProS type 2 subfamily. In terms of assembly, homodimer.

The protein resides in the cytoplasm. The enzyme catalyses tRNA(Pro) + L-proline + ATP = L-prolyl-tRNA(Pro) + AMP + diphosphate. Its function is as follows. Catalyzes the attachment of proline to tRNA(Pro) in a two-step reaction: proline is first activated by ATP to form Pro-AMP and then transferred to the acceptor end of tRNA(Pro). This Bartonella tribocorum (strain CIP 105476 / IBS 506) protein is Proline--tRNA ligase.